The sequence spans 196 residues: UPF0056 membrane protein BU449 (196 aa).

6 consecutive transmembrane segments (helical) span residues 8 to 28, 45 to 65, 71 to 91, 105 to 125, 134 to 154, and 174 to 194; these read TILLVLIMDPLGNLPIFMTIL, IIALIVMLLFLFVGEKILIIL, TVSISGGVILFLIAIKMIFPS, FLVPLAIPLVAGPSLLATLML, MFYLVGSLLISWFFTVIILLS, and MGLVLIMLSTQMFLDGIRAWF.

The protein belongs to the UPF0056 (MarC) family.

The protein resides in the cell membrane. The protein is UPF0056 membrane protein BU449 of Buchnera aphidicola subsp. Acyrthosiphon pisum (strain APS) (Acyrthosiphon pisum symbiotic bacterium).